The primary structure comprises 439 residues: Adenylosuccinate synthetase (439 aa).

Residues 14 to 20 (GDEGKGK) and 42 to 44 (GHT) contribute to the GTP site. Asp15 acts as the Proton acceptor in catalysis. Mg(2+) contacts are provided by Asp15 and Gly42. Residues 15 to 18 (DEGK), 40 to 43 (NAGH), Thr130, Arg144, Gln225, Thr240, and Arg304 contribute to the IMP site. His43 functions as the Proton donor in the catalytic mechanism. Position 300 to 306 (300 to 306 (TTTGRRR)) interacts with substrate. Residues Arg306, 332–334 (KLD), and 414–416 (SLG) contribute to the GTP site.

Belongs to the adenylosuccinate synthetase family. Homodimer. Requires Mg(2+) as cofactor.

The protein resides in the cytoplasm. It carries out the reaction IMP + L-aspartate + GTP = N(6)-(1,2-dicarboxyethyl)-AMP + GDP + phosphate + 2 H(+). The protein operates within purine metabolism; AMP biosynthesis via de novo pathway; AMP from IMP: step 1/2. Plays an important role in the de novo pathway of purine nucleotide biosynthesis. Catalyzes the first committed step in the biosynthesis of AMP from IMP. The sequence is that of Adenylosuccinate synthetase from Synechococcus sp. (strain CC9902).